A 458-amino-acid polypeptide reads, in one-letter code: Phosphoglucosamine mutase (458 aa).

The Phosphoserine intermediate role is filled by Ser102. Mg(2+) is bound by residues Ser102, Asp252, Asp254, and Asp256. A Phosphoserine modification is found at Ser102.

Belongs to the phosphohexose mutase family. Mg(2+) is required as a cofactor. Post-translationally, activated by phosphorylation.

It catalyses the reaction alpha-D-glucosamine 1-phosphate = D-glucosamine 6-phosphate. Its function is as follows. Catalyzes the conversion of glucosamine-6-phosphate to glucosamine-1-phosphate. In Anaeromyxobacter dehalogenans (strain 2CP-C), this protein is Phosphoglucosamine mutase.